A 490-amino-acid chain; its full sequence is Tryptophan 5-hydroxylase 2 (490 aa).

Phosphoserine is present on Ser-19. Over residues 31 to 42 (LGSSTLNKPNSG) the composition is skewed to polar residues. Residues 31-58 (LGSSTLNKPNSGKNDDKGNKGSSKREAA) form a disordered region. Over residues 43-58 (KNDDKGNKGSSKREAA) the composition is skewed to basic and acidic residues. Residues 65–140 (AVVFSLKNEV…TIVTLNPPEN (76 aa)) enclose the ACT domain. Fe cation is bound by residues His-318, His-323, and Glu-363.

This sequence belongs to the biopterin-dependent aromatic amino acid hydroxylase family. In terms of assembly, interacts with DNAJC12. Requires Fe(2+) as cofactor. As to expression, brain specific.

The enzyme catalyses (6R)-L-erythro-5,6,7,8-tetrahydrobiopterin + L-tryptophan + O2 = 5-hydroxy-L-tryptophan + (4aS,6R)-4a-hydroxy-L-erythro-5,6,7,8-tetrahydrobiopterin. It functions in the pathway aromatic compound metabolism; serotonin biosynthesis; serotonin from L-tryptophan: step 1/2. In Homo sapiens (Human), this protein is Tryptophan 5-hydroxylase 2 (TPH2).